A 529-amino-acid polypeptide reads, in one-letter code: Laccase-1 (529 aa).

A signal peptide spans 1 to 23 (MFPGARILATLTLALHLLHGTHA). 3 consecutive Plastocyanin-like domains span residues 25-159 (IGPT…FIVY), 170-312 (DVDN…ILRY), and 380-499 (TAPV…FAED). N57 is a glycosylation site (N-linked (GlcNAc...) asparagine). Residues H96, H98, H141, and H143 each contribute to the Cu cation site. 2 disulfide bridges follow: C117–C514 and C149–C236. N-linked (GlcNAc...) asparagine glycosylation is found at N239 and N282. Cu cation-binding residues include H425, H428, H430, H481, C482, H483, and H487.

Belongs to the multicopper oxidase family. Cu cation serves as cofactor.

Its subcellular location is the secreted. The enzyme catalyses 4 hydroquinone + O2 = 4 benzosemiquinone + 2 H2O. Lignin degradation and detoxification of lignin-derived products. The protein is Laccase-1 (POX1) of Pleurotus ostreatus (Oyster mushroom).